Reading from the N-terminus, the 550-residue chain is Leucine-rich repeat LGI family member 2 (550 aa).

The first 25 residues, 1–25 (MALWRGGGALGLLLLSAACLIPPSA), serve as a signal peptide directing secretion. Residues 26-62 (QVRRLARCPATCSCTKESIICVGSSWVPRIVPGDISS) enclose the LRRNT domain. N-linked (GlcNAc...) asparagine glycosylation occurs at Asn-67. 2 LRR repeats span residues 83–104 (SLQL…AFAG) and 107–128 (HLEY…AFRG). The 51-residue stretch at 140–190 (NKFECDCKAKWLYLWLKMTNSTVSDVLCIGPPEYQEKKLNEVTSFDYECTT) folds into the LRRCT domain. The N-linked (GlcNAc...) asparagine glycan is linked to Asn-159. EAR repeat units lie at residues 224 to 266 (DFVV…EWDH), 270 to 312 (NFRS…KYDE), 316 to 363 (KFVK…KWNS), 365 to 408 (GFYS…QWNK), 412 to 455 (KFVP…RWNS), 457 to 499 (QFVE…QWDK), and 503 to 545 (QFKK…EHII). An N-linked (GlcNAc...) asparagine glycan is attached at Asn-276. The N-linked (GlcNAc...) asparagine glycan is linked to Asn-407.

As to expression, brain.

It is found in the secreted. Its function is as follows. Required for the development of soma-targeting inhibitory GABAergic synapses made by parvalbumin-positive basket cells. The chain is Leucine-rich repeat LGI family member 2 (Lgi2) from Mus musculus (Mouse).